Consider the following 300-residue polypeptide: ATP-dependent (S)-NAD(P)H-hydrate dehydratase (300 aa).

One can recognise a YjeF C-terminal domain in the interval 14 to 293 (LLTLFKTIVP…NEISAVFRSD (280 aa)). Residues Gly-114 and 167 to 173 (NAMEFRR) each bind (6S)-NADPHX. Residues 198-202 (KGVND) and 219-228 (GSGRRCGGQG) each bind ATP. Asp-229 contributes to the (6S)-NADPHX binding site.

The protein belongs to the NnrD/CARKD family. It depends on Mg(2+) as a cofactor.

It catalyses the reaction (6S)-NADHX + ATP = ADP + phosphate + NADH + H(+). The catalysed reaction is (6S)-NADPHX + ATP = ADP + phosphate + NADPH + H(+). Functionally, catalyzes the dehydration of the S-form of NAD(P)HX at the expense of ATP, which is converted to ADP. Together with NAD(P)HX epimerase, which catalyzes the epimerization of the S- and R-forms, the enzyme allows the repair of both epimers of NAD(P)HX, a damaged form of NAD(P)H that is a result of enzymatic or heat-dependent hydration. This Drosophila pseudoobscura pseudoobscura (Fruit fly) protein is ATP-dependent (S)-NAD(P)H-hydrate dehydratase.